The following is a 265-amino-acid chain: Type III pantothenate kinase (265 aa).

6–13 contributes to the ATP binding site; that stretch reads DVGNTHTV. Position 112-115 (112-115) interacts with substrate; the sequence is GADR. Aspartate 114 serves as the catalytic Proton acceptor. Aspartate 134 is a K(+) binding site. Threonine 137 contacts ATP. Threonine 189 contributes to the substrate binding site.

Belongs to the type III pantothenate kinase family. As to quaternary structure, homodimer. The cofactor is NH4(+). It depends on K(+) as a cofactor.

The protein resides in the cytoplasm. It carries out the reaction (R)-pantothenate + ATP = (R)-4'-phosphopantothenate + ADP + H(+). Its pathway is cofactor biosynthesis; coenzyme A biosynthesis; CoA from (R)-pantothenate: step 1/5. Catalyzes the phosphorylation of pantothenate (Pan), the first step in CoA biosynthesis. The protein is Type III pantothenate kinase of Streptomyces avermitilis (strain ATCC 31267 / DSM 46492 / JCM 5070 / NBRC 14893 / NCIMB 12804 / NRRL 8165 / MA-4680).